The primary structure comprises 98 residues: Plastocyanin (98 aa).

The Plastocyanin-like domain occupies 1–98; it reads AQIVKLGGDD…AGMKMTITVQ (98 aa). H38, C83, H86, and M91 together coordinate Cu(2+).

Belongs to the plastocyanin family. It depends on Cu(2+) as a cofactor.

The protein localises to the plastid. It localises to the chloroplast thylakoid membrane. Participates in electron transfer between P700 and the cytochrome b6-f complex in photosystem I. Has antiviral activity against Potato virus Y (strain N). This is Plastocyanin (PETE) from Ulva pertusa (Sea lettuce).